The primary structure comprises 340 residues: Probable HTH-type transcriptional regulator EndR (340 aa).

The HTH lacI-type domain occupies M1–Q58. A DNA-binding region (H-T-H motif) is located at residues M5–Q24.

Functionally, putative repressor of the endoglucanase operon. The chain is Probable HTH-type transcriptional regulator EndR (endR) from Paenibacillus polymyxa (Bacillus polymyxa).